The following is a 359-amino-acid chain: tRNA-specific 2-thiouridylase MnmA (359 aa).

Residues Ala-6–Ser-13 and Leu-32 each bind ATP. The active-site Nucleophile is Cys-101. An intrachain disulfide couples Cys-101 to Cys-193. Gly-125 is a binding site for ATP. The interaction with tRNA stretch occupies residues Lys-143–Gln-145. Residue Cys-193 is the Cysteine persulfide intermediate of the active site.

It belongs to the MnmA/TRMU family.

The protein localises to the cytoplasm. It catalyses the reaction S-sulfanyl-L-cysteinyl-[protein] + uridine(34) in tRNA + AH2 + ATP = 2-thiouridine(34) in tRNA + L-cysteinyl-[protein] + A + AMP + diphosphate + H(+). Catalyzes the 2-thiolation of uridine at the wobble position (U34) of tRNA, leading to the formation of s(2)U34. In Mycobacterium sp. (strain JLS), this protein is tRNA-specific 2-thiouridylase MnmA.